The chain runs to 339 residues: UDP-N-acetylglucosamine--N-acetylmuramyl-(pentapeptide) pyrophosphoryl-undecaprenol N-acetylglucosamine transferase (339 aa).

UDP-N-acetyl-alpha-D-glucosamine is bound by residues 10–12 (TGG), Asn124, Arg168, Ser188, Ile235, and Gln280.

It belongs to the glycosyltransferase 28 family. MurG subfamily.

It is found in the cell inner membrane. It carries out the reaction di-trans,octa-cis-undecaprenyl diphospho-N-acetyl-alpha-D-muramoyl-L-alanyl-D-glutamyl-meso-2,6-diaminopimeloyl-D-alanyl-D-alanine + UDP-N-acetyl-alpha-D-glucosamine = di-trans,octa-cis-undecaprenyl diphospho-[N-acetyl-alpha-D-glucosaminyl-(1-&gt;4)]-N-acetyl-alpha-D-muramoyl-L-alanyl-D-glutamyl-meso-2,6-diaminopimeloyl-D-alanyl-D-alanine + UDP + H(+). Its pathway is cell wall biogenesis; peptidoglycan biosynthesis. Functionally, cell wall formation. Catalyzes the transfer of a GlcNAc subunit on undecaprenyl-pyrophosphoryl-MurNAc-pentapeptide (lipid intermediate I) to form undecaprenyl-pyrophosphoryl-MurNAc-(pentapeptide)GlcNAc (lipid intermediate II). This chain is UDP-N-acetylglucosamine--N-acetylmuramyl-(pentapeptide) pyrophosphoryl-undecaprenol N-acetylglucosamine transferase, found in Pseudothermotoga lettingae (strain ATCC BAA-301 / DSM 14385 / NBRC 107922 / TMO) (Thermotoga lettingae).